A 223-amino-acid polypeptide reads, in one-letter code: Endonuclease V (223 aa).

Residues Asp-45 and Asp-113 each coordinate Mg(2+).

Belongs to the endonuclease V family. It depends on Mg(2+) as a cofactor.

Its subcellular location is the cytoplasm. It carries out the reaction Endonucleolytic cleavage at apurinic or apyrimidinic sites to products with a 5'-phosphate.. In terms of biological role, DNA repair enzyme involved in the repair of deaminated bases. Selectively cleaves double-stranded DNA at the second phosphodiester bond 3' to a deoxyinosine leaving behind the intact lesion on the nicked DNA. This is Endonuclease V from Dehalococcoides mccartyi (strain ATCC BAA-2100 / JCM 16839 / KCTC 5957 / BAV1).